The primary structure comprises 141 residues: MAKKGAGATRGITPVRPTRAIPVGAYLTVADNSGAKVIQVIGVVEYHGTRRRLASAGVGDMVVATVKKGRPDMRHQVVRAVIIRQRKEYRRLDGMRIKFEDNAAVIVTPEGVPRGTEIRGPVAREAAERWVRIGSIASIIV.

It belongs to the universal ribosomal protein uL14 family. As to quaternary structure, part of the 50S ribosomal subunit. Forms a cluster with proteins L3 and L24e, part of which may contact the 16S rRNA in 2 intersubunit bridges.

Binds to 23S rRNA. Forms part of two intersubunit bridges in the 70S ribosome. The protein is Large ribosomal subunit protein uL14 of Pyrococcus abyssi (strain GE5 / Orsay).